Here is a 288-residue protein sequence, read N- to C-terminus: ATP synthase gamma chain (288 aa).

The protein belongs to the ATPase gamma chain family. In terms of assembly, F-type ATPases have 2 components, CF(1) - the catalytic core - and CF(0) - the membrane proton channel. CF(1) has five subunits: alpha(3), beta(3), gamma(1), delta(1), epsilon(1). CF(0) has three main subunits: a, b and c.

The protein localises to the cell inner membrane. In terms of biological role, produces ATP from ADP in the presence of a proton gradient across the membrane. The gamma chain is believed to be important in regulating ATPase activity and the flow of protons through the CF(0) complex. The protein is ATP synthase gamma chain of Laribacter hongkongensis (strain HLHK9).